A 929-amino-acid polypeptide reads, in one-letter code: Isoleucine--tRNA ligase (929 aa).

The 'HIGH' region motif lies at 58–68 (PYANGDIHIGH). Position 563 (Glu563) interacts with L-isoleucyl-5'-AMP. Residues 605 to 609 (KMSKS) carry the 'KMSKS' region motif. Position 608 (Lys608) interacts with ATP. Zn(2+) is bound by residues Cys892, Cys895, Cys912, and Cys915.

Belongs to the class-I aminoacyl-tRNA synthetase family. IleS type 1 subfamily. Monomer. The cofactor is Zn(2+).

The protein resides in the cytoplasm. It carries out the reaction tRNA(Ile) + L-isoleucine + ATP = L-isoleucyl-tRNA(Ile) + AMP + diphosphate. In terms of biological role, catalyzes the attachment of isoleucine to tRNA(Ile). As IleRS can inadvertently accommodate and process structurally similar amino acids such as valine, to avoid such errors it has two additional distinct tRNA(Ile)-dependent editing activities. One activity is designated as 'pretransfer' editing and involves the hydrolysis of activated Val-AMP. The other activity is designated 'posttransfer' editing and involves deacylation of mischarged Val-tRNA(Ile). The polypeptide is Isoleucine--tRNA ligase (Neisseria gonorrhoeae (strain ATCC 700825 / FA 1090)).